Reading from the N-terminus, the 1105-residue chain is Carbamoyl phosphate synthase large chain (1105 aa).

The segment at 1-402 (MPKRDDIEKV…ALGKAVRSLE (402 aa)) is carboxyphosphate synthetic domain. Residues Arg-129, Arg-169, Gly-175, Gly-176, Lys-208, Val-210, Glu-215, Gly-241, Ile-242, His-243, Gln-285, and Glu-299 each contribute to the ATP site. An ATP-grasp 1 domain is found at 133–328 (KTAMKNCGLE…IAKISALLAV (196 aa)). Residues Gln-285, Glu-299, and Asn-301 each contribute to the Mg(2+) site. Gln-285, Glu-299, and Asn-301 together coordinate Mn(2+). Residues 403 to 542 (LDIAPKLDLR…STYNGMENET (140 aa)) are oligomerization domain. The tract at residues 543-945 (IPSKRRKIMV…AFAKAQLSAD (403 aa)) is carbamoyl phosphate synthetic domain. One can recognise an ATP-grasp 2 domain in the interval 667–858 (AKFLKQSGLS…VAKIAAKTII (192 aa)). ATP is bound by residues Arg-703, Lys-742, Leu-744, Glu-749, Gly-774, Ile-775, His-776, Ser-777, Gln-817, and Glu-829. 3 residues coordinate Mg(2+): Gln-817, Glu-829, and Asn-831. Residues Gln-817, Glu-829, and Asn-831 each contribute to the Mn(2+) site. The MGS-like domain occupies 940–1101 (AQLSADGIST…QDIFYAQQNT (162 aa)). Positions 946-1105 (GISTKSLLVT…YAQQNTLLKK (160 aa)) are allosteric domain.

It belongs to the CarB family. In terms of assembly, composed of two chains; the small (or glutamine) chain promotes the hydrolysis of glutamine to ammonia, which is used by the large (or ammonia) chain to synthesize carbamoyl phosphate. Tetramer of heterodimers (alpha,beta)4. The cofactor is Mg(2+). It depends on Mn(2+) as a cofactor.

The catalysed reaction is hydrogencarbonate + L-glutamine + 2 ATP + H2O = carbamoyl phosphate + L-glutamate + 2 ADP + phosphate + 2 H(+). It carries out the reaction hydrogencarbonate + NH4(+) + 2 ATP = carbamoyl phosphate + 2 ADP + phosphate + 2 H(+). The protein operates within amino-acid biosynthesis; L-arginine biosynthesis; carbamoyl phosphate from bicarbonate: step 1/1. It functions in the pathway pyrimidine metabolism; UMP biosynthesis via de novo pathway; (S)-dihydroorotate from bicarbonate: step 1/3. Large subunit of the glutamine-dependent carbamoyl phosphate synthetase (CPSase). CPSase catalyzes the formation of carbamoyl phosphate from the ammonia moiety of glutamine, carbonate, and phosphate donated by ATP, constituting the first step of 2 biosynthetic pathways, one leading to arginine and/or urea and the other to pyrimidine nucleotides. The large subunit (synthetase) binds the substrates ammonia (free or transferred from glutamine from the small subunit), hydrogencarbonate and ATP and carries out an ATP-coupled ligase reaction, activating hydrogencarbonate by forming carboxy phosphate which reacts with ammonia to form carbamoyl phosphate. This is Carbamoyl phosphate synthase large chain from Pseudothermotoga lettingae (strain ATCC BAA-301 / DSM 14385 / NBRC 107922 / TMO) (Thermotoga lettingae).